Reading from the N-terminus, the 303-residue chain is 1D-myo-inositol 2-acetamido-2-deoxy-alpha-D-glucopyranoside deacetylase (303 aa).

H15, D18, and H157 together coordinate Zn(2+).

It belongs to the MshB deacetylase family. It depends on Zn(2+) as a cofactor.

The enzyme catalyses 1D-myo-inositol 2-acetamido-2-deoxy-alpha-D-glucopyranoside + H2O = 1D-myo-inositol 2-amino-2-deoxy-alpha-D-glucopyranoside + acetate. Its function is as follows. Catalyzes the deacetylation of 1D-myo-inositol 2-acetamido-2-deoxy-alpha-D-glucopyranoside (GlcNAc-Ins) in the mycothiol biosynthesis pathway. In Kribbella flavida (strain DSM 17836 / JCM 10339 / NBRC 14399), this protein is 1D-myo-inositol 2-acetamido-2-deoxy-alpha-D-glucopyranoside deacetylase.